The primary structure comprises 701 residues: MADLLFEIGAEEIPAGFVPGALRQLEDDLSKALADARLAHGEVRSVGTPRRLAVWARDVAPKQTDARTEAFGPPVAQAYDAEGKPTPAATGFARSQGVEVSALVRAQTPKGERVAVTKVEKGRRAEQVLPALLERLVGGLRFRKAMRSRFDEATFARPVRWMVALLGGRPLKVRHGEVTSGKVTYGHRFLAPKAIALKGTPDDYLAKLRRAHVLADPVERRAALLAELARAGKEAAGKVRDDPALVEQVLYLVEEPTAVVGEFEKSNLELPPEVVISEMRNHQRYFAVVDGKGRLKNRFVAVSATRVKDPAVARHGYERVLRARLADARFFFEEDRKRRLHERIEDLGRRTFQAKLGSELDRAQRIGAVASALARALGKDALVADLLEASRLAKVDLNTGMVGEFPELQGTMGAHYARLEGLKPEIADAIEDHYKPIGAAEELPRSDLGALVAVADRLHSLVGIIGVGEKATGAADPFGLRRSAIGILRIVIARGYHLSLAAAVEQTLDALSGVKLAAGRAVVAEQVLDFLRGRVRAAWTERFDADLVEAVLAAGSDDVVDARRRLEALADAKARPDFGSLAVAFKRVANIQEKAGGSGAAAVDPALLRDAAEKDLLAALEKVEQEVVARRAARDYPAVLRTVATLEPAVARFFDGVLVMAEDPALRANRLGLMRRVAALFSDLADFRKIQAEAPAQARAG.

Belongs to the class-II aminoacyl-tRNA synthetase family. Tetramer of two alpha and two beta subunits.

It is found in the cytoplasm. The catalysed reaction is tRNA(Gly) + glycine + ATP = glycyl-tRNA(Gly) + AMP + diphosphate. This chain is Glycine--tRNA ligase beta subunit, found in Anaeromyxobacter dehalogenans (strain 2CP-1 / ATCC BAA-258).